Here is a 1789-residue protein sequence, read N- to C-terminus: MVNAVMDAIALLSSLASDLDIMLNDLRSAPSHAATATATATTTATVATATATTTANRQQQHHNHHNQQQMQSRQLHAHHWQSINNNKNNNISNKNNNNNNNNNNNINNNNNNNNHSAHPPCLIDIKLKSSRSAATKITHTTTANQLQQQQRRRVAPKPLPRPPRRTRPTGQKEVGPSEEDGDTDASDLANMTSPLSASAAATRINGLSPEVKKVQRLPLWNARNGNGSTTTHCHPTGVSVQRRLPIQSHQQRILNQRFHHQRMHHGTSEPIPSGVATPSSLDSASVDGGKSHTGNNNNINNNHNGQQSQKSQQQAGLAAKLNVLAQSNLNNNNTTNQPGSMTPASNRTGLDSNQNQKQNLNADSRRSSSVDPDADADDVVDAAHGGAFEDDMQALLPKCSRRSRDELSQSRTSLVSSSEGGILAEGETSSEDDEEEPVEAEDEGEESSRDSSDNSPPCDLGLMERLLVTHPMWFLPGIQRSGAVHLLQGKEEGTFIVRGSSQPNTMAVSVRLPQDTGPYIEHYLIQSHDNVLSLESSRFTFGSIPSLIAHYAQCCDELPVQLMLPRVLREANNRKKLSSLALLGQEFWSYVSSPALLGPLTPSVAPSKDQQLLDAKSPLSLTETSGLGTATFFSDTVSKPPPTGAPPLPGGGLFSPTGSGQLLGFFSQAGTPSDTTNSSLSSFTTSGGQHMQLLSPNSVDSVILTMSPVDNPGHYLPGSTGAPMAPLCPSVVDQQLSTFKVAQTAPEVDQVRPQRPKPPNTLNLKPPAPPLRWSKPHSPDQNGSANGNFTVTTTVTFSMENGGGGGSGPTVGNGNGKFVEVTTPAASNPFNALLNGQASTFQTFAKRLSPEGECKDTLSSQGSSSNDSRWPPPARKLLTSPMTPLTPSGGSSSSGGKSRKSRAGKESQHYKESDILESPPMQYCASALSDKISDYEDVWSHDPSDRASLLTSFRPALDTVGGVMNRRPDLLAETPSTPTPTQQSHLTPCEEETTATPNESSSQSLLQFSGDVPARSRAGLLLPNLSGQVPPVAMTKSMTAAEDDGGDTTPTAEGQANGASRSKQGSPFYAEPADALRQAGLTSAATAILRRQHRSQMLHASQRHSEPLKAGFGGSGNGAMLQPSDLEKLAGSLDELKPKPKVSQQQQQSQQQQQPTKRARNRIDHWQLDSSWEFMAKQDTGSHAGGDYDTAAIDWQEKENSLGRDSRADGQGKKRTLTIHQIIANRLPDLNLPELVRCSTPPQTAALQPHVLGQDKAGVGCDGSQKSFQSQIGCRLSSYDNVFCQNSFGGIDSAQSDDGTIFSEPWDSSQWDTFLPHDDATINSDTIHLSKCRPALSEDDTIVEELQSTKDGSNGSCNQDTLKANRNGAGHHKLNNGNGNGKANNRPKVATILRNPSMRDREVLCHPRNKMSIQSSGPGDSLRAYTLQLAQDPSSTFARNIENFICCTKESREAAPQVVMRNMRQFMSGMKNYLVKHGEGKFHAELETARARLKSDEFLNLDAMLETVMHQLVVLPLREHLYGIFVDHYQRSEDIQLLAQNVRYACEREAADFGIRPTVTPPSQAALRLIANLLWRLQEAELPLDKLELFLCVISTVFDATGCPRGQQLGADDFLPVLVYVVAKCGFVGAEIEAEFMWGLLQPTLLNGEPGYYLTALCSAVQVLKTFMASEGESGSGSLDWRSSCLPACSSVLRVIIPDECNGSLQTRTLPVRPHTTTREVCRIIAHKARITNPQDYALFKLVDGEETLLTDAECPQDARLAAKGKHCMLAYKRIDAKIAWPTAQLAGH.

Disordered stretches follow at residues 53–120 (TTAN…AHPP), 140–190 (TTTA…DLAN), 218–237 (PLWN…HPTG), 261–317 (QRMH…QAGL), 329–378 (LNNN…DADD), and 401–460 (RRSR…PCDL). Residues 82-114 (SINNNKNNNISNKNNNNNNNNNNNINNNNNNNN) are compositionally biased toward low complexity. Over residues 140 to 149 (TTTANQLQQQ) the composition is skewed to polar residues. Acidic residues predominate over residues 176–185 (PSEEDGDTDA). Residues 223–233 (RNGNGSTTTHC) show a composition bias toward polar residues. Residues 295-317 (NNNNINNNHNGQQSQKSQQQAGL) are compositionally biased toward low complexity. The segment covering 337–361 (QPGSMTPASNRTGLDSNQNQKQNLN) has biased composition (polar residues). Low complexity predominate over residues 409–418 (QSRTSLVSSS). The span at 428-445 (TSSEDDEEEPVEAEDEGE) shows a compositional bias: acidic residues. The SH2 domain maps to 473–566 (WFLPGIQRSG…ELPVQLMLPR (94 aa)). 7 disordered regions span residues 632–689 (FFSD…SGGQ), 744–787 (TAPE…SANG), 852–918 (GECK…ILES), 969–1006 (DLLA…QSLL), 1040–1067 (AAED…QGSP), 1094–1123 (RSQM…MLQP), and 1138–1160 (PKPK…KRAR). Positions 639-649 (KPPPTGAPPLP) are enriched in pro residues. A compositionally biased stretch (low complexity) spans 671–686 (TPSDTTNSSLSSFTTS). Residues 857-868 (TLSSQGSSSNDS) are compositionally biased toward polar residues. A compositionally biased stretch (basic and acidic residues) spans 903 to 914 (AGKESQHYKESD). Over residues 974-984 (TPSTPTPTQQS) the composition is skewed to low complexity. 2 stretches are compositionally biased toward polar residues: residues 994 to 1006 (TATP…QSLL) and 1048 to 1065 (TTPT…SKQG). The span at 1143–1154 (SQQQQQSQQQQQ) shows a compositional bias: low complexity. The VPS9 domain maps to 1531–1673 (RSEDIQLLAQ…LKTFMASEGE (143 aa)). The Ras-associating domain occupies 1689–1777 (CSSVLRVIIP…CMLAYKRIDA (89 aa)).

The protein belongs to the RIN (Ras interaction/interference) family. In terms of tissue distribution, in late cellular blastoderm embryos, it is expressed in the posterior end. Then, as development proceeds, it is expressed in the developing midgut, amnioserosa and in a specific subset of CNS neurons. Isoform 1 is expressed earlier in developing midgut and amnioserosa, but is not expressed in the CNS.

Its function is as follows. Potential Ras effector protein. May function as a guanine nucleotide exchange (GEF), by exchanging bound GDP for free GTP. In Drosophila melanogaster (Fruit fly), this protein is Protein sprint (spri).